Reading from the N-terminus, the 406-residue chain is Large ribosomal subunit protein uL4z (406 aa).

Residues 56–95 (PYAVSKKAGHQTSAESWGTGRAVSRIPRVPGGGTHRAGQA) form a disordered region.

Belongs to the universal ribosomal protein uL4 family.

This is Large ribosomal subunit protein uL4z (RPL4A) from Arabidopsis thaliana (Mouse-ear cress).